The sequence spans 245 residues: Nisin immunity protein (245 aa).

The N-terminal stretch at 1-19 (MRRYLILIVALIGITGLSG) is a signal peptide. Residue Cys-20 is the site of N-palmitoyl cysteine attachment. A lipid anchor (S-diacylglycerol cysteine) is attached at Cys-20.

The protein resides in the cell membrane. Its function is as follows. Involved in immunity against exogenously supplied nisin. The sequence is that of Nisin immunity protein (nisI) from Lactococcus lactis subsp. lactis (Streptococcus lactis).